Reading from the N-terminus, the 445-residue chain is Deoxyribodipyrimidine photo-lyase (445 aa).

A Photolyase/cryptochrome alpha/beta domain is found at 20-148 (SYVVYWMQAS…QVESNVIVPV (129 aa)). R239 provides a ligand contact to DNA.

It belongs to the DNA photolyase class-2 family. It depends on FAD as a cofactor. Coenzyme F420-(gamma-Glu)n is required as a cofactor.

The enzyme catalyses cyclobutadipyrimidine (in DNA) = 2 pyrimidine residues (in DNA).. Involved in repair of UV radiation-induced DNA damage. Catalyzes the light-dependent monomerization (300-600 nm) of cyclobutyl pyrimidine dimers (in cis-syn configuration), which are formed between adjacent bases on the same DNA strand upon exposure to ultraviolet radiation. The chain is Deoxyribodipyrimidine photo-lyase (phr) from Methanothermobacter thermautotrophicus (strain ATCC 29096 / DSM 1053 / JCM 10044 / NBRC 100330 / Delta H) (Methanobacterium thermoautotrophicum).